Here is a 213-residue protein sequence, read N- to C-terminus: Small ribosomal subunit protein uS5 (213 aa).

Residues Leu-49–Val-112 form the S5 DRBM domain.

This sequence belongs to the universal ribosomal protein uS5 family. As to quaternary structure, part of the 30S ribosomal subunit. Contacts protein S4.

With S4 and S12 plays an important role in translational accuracy. This chain is Small ribosomal subunit protein uS5, found in Methanobrevibacter smithii (strain ATCC 35061 / DSM 861 / OCM 144 / PS).